We begin with the raw amino-acid sequence, 111 residues long: Large ribosomal subunit protein uL24 (111 aa).

The segment covering 48-65 (EKPSRSNREGGRTEREAP) has biased composition (basic and acidic residues). Residues 48–111 (EKPSRSNREG…AKTTGEELDD (64 aa)) form a disordered region. Polar residues predominate over residues 69–80 (SNVNPIDSNGES). The span at 86–95 (KKVEDPDTGR) shows a compositional bias: basic and acidic residues.

Belongs to the universal ribosomal protein uL24 family. Part of the 50S ribosomal subunit.

In terms of biological role, one of two assembly initiator proteins, it binds directly to the 5'-end of the 23S rRNA, where it nucleates assembly of the 50S subunit. One of the proteins that surrounds the polypeptide exit tunnel on the outside of the subunit. The sequence is that of Large ribosomal subunit protein uL24 from Salinibacter ruber (strain DSM 13855 / M31).